A 254-amino-acid chain; its full sequence is uncharacterized protein (254 aa).

Residues 66 to 111 (DMVSEMNKRMDDLAARIVVLEDEKAELRRINQRLTEKVRDKDMEKA) adopt a coiled-coil conformation.

This is an uncharacterized protein from Ostreid herpesvirus 1 (isolate France) (OsHV-1).